Here is a 183-residue protein sequence, read N- to C-terminus: Der GTPase-activating protein YihI (183 aa).

The tract at residues 1–101 (MSRSKKTRKG…KLTDEQKLLK (101 aa)) is disordered. Basic and acidic residues-rich tracts occupy residues 22–46 (KKQDRAEVTGKRAEKGNKSGSRHNE) and 92–101 (KLTDEQKLLK).

This sequence belongs to the YihI family. As to quaternary structure, interacts with Der.

Its function is as follows. A GTPase-activating protein (GAP) that modifies Der/EngA GTPase function. May play a role in ribosome biogenesis. The sequence is that of Der GTPase-activating protein YihI from Shewanella oneidensis (strain ATCC 700550 / JCM 31522 / CIP 106686 / LMG 19005 / NCIMB 14063 / MR-1).